We begin with the raw amino-acid sequence, 200 residues long: Proteasome subunit beta 2 (200 aa).

Residues Met1–Gly7 constitute a propeptide, removed in mature form; by autocatalysis. Thr8 acts as the Nucleophile in catalysis.

It belongs to the peptidase T1B family. The 20S proteasome core is composed of 14 alpha and 14 beta subunits that assemble into four stacked heptameric rings, resulting in a barrel-shaped structure. The two inner rings, each composed of seven catalytic beta subunits, are sandwiched by two outer rings, each composed of seven alpha subunits. The catalytic chamber with the active sites is on the inside of the barrel. Has a gated structure, the ends of the cylinder being occluded by the N-termini of the alpha-subunits. Is capped at one or both ends by the proteasome regulatory ATPase, PAN.

The protein localises to the cytoplasm. It catalyses the reaction Cleavage of peptide bonds with very broad specificity.. With respect to regulation, the formation of the proteasomal ATPase PAN-20S proteasome complex, via the docking of the C-termini of PAN into the intersubunit pockets in the alpha-rings, triggers opening of the gate for substrate entry. Interconversion between the open-gate and close-gate conformations leads to a dynamic regulation of the 20S proteasome proteolysis activity. Component of the proteasome core, a large protease complex with broad specificity involved in protein degradation. This chain is Proteasome subunit beta 2, found in Thermococcus gammatolerans (strain DSM 15229 / JCM 11827 / EJ3).